A 100-amino-acid polypeptide reads, in one-letter code: Apolipoprotein C-II (100 aa).

A signal peptide spans 1–22; the sequence is MGTRFLLALFLVLLVLGFEVQG. A lipid binding region spans residues 66-74; sequence TVDEKLRDM. Positions 78-100 are lipoprotein lipase cofactor; that stretch reads STAAVSTYAGIFTDQLLTLLKGD.

This sequence belongs to the apolipoprotein C2 family. Post-translationally, proapolipoprotein C-II is synthesized as a sialic acid containing glycoprotein which is subsequently desialylated prior to its proteolytic processing. Proapolipoprotein C-II, the major form found in plasma undergoes proteolytic cleavage of its N-terminal hexapeptide to generate apolipoprotein C-II, which occurs as the minor form in plasma.

The protein resides in the secreted. In terms of biological role, component of chylomicrons, very low-density lipoproteins (VLDL), low-density lipoproteins (LDL), and high-density lipoproteins (HDL) in plasma. Plays an important role in lipoprotein metabolism as an activator of lipoprotein lipase. Both proapolipoprotein C-II and apolipoprotein C-II can activate lipoprotein lipase. This Otolemur garnettii (Small-eared galago) protein is Apolipoprotein C-II (APOC2).